The sequence spans 308 residues: MARMTDASPYLDFDRDTWRALRKSMPQVLTANEVEKLRGIGDRIDLTEVAEVYLPLSRLIHMQVEARQKLTAATEAFLGNPPTHVPFVIGVAGSVAVGKSTTARLLQVLLERWESHPKVDLVTTDGFLYPTAYLKEHGLMQRKGYPESYDRRALMRFVTDVKSGKPLVTAPLYSHVSYDIVPGEFQEVRQPDILILEGLNVLQTGPTLMVSDLFDFSVYVDARVDDIEKWYIDRFLKLRHTAFREPGAHFASFADMTDEEAYVQAREIWQSINLPNLIENILPTRVRASLVLRKGSHHLVDRVRMRKL.

Position 93–100 (93–100) interacts with ATP; sequence GSVAVGKS.

The protein belongs to the prokaryotic pantothenate kinase family.

The protein localises to the cytoplasm. The enzyme catalyses (R)-pantothenate + ATP = (R)-4'-phosphopantothenate + ADP + H(+). The protein operates within cofactor biosynthesis; coenzyme A biosynthesis; CoA from (R)-pantothenate: step 1/5. This is Pantothenate kinase from Corynebacterium aurimucosum (strain ATCC 700975 / DSM 44827 / CIP 107346 / CN-1) (Corynebacterium nigricans).